We begin with the raw amino-acid sequence, 115 residues long: Large ribosomal subunit protein bL20 (115 aa).

Belongs to the bacterial ribosomal protein bL20 family.

In terms of biological role, binds directly to 23S ribosomal RNA and is necessary for the in vitro assembly process of the 50S ribosomal subunit. It is not involved in the protein synthesizing functions of that subunit. The chain is Large ribosomal subunit protein bL20 from Pelodictyon phaeoclathratiforme (strain DSM 5477 / BU-1).